The sequence spans 226 residues: 7-cyano-7-deazaguanine synthase (226 aa).

Isoleucine 7–alanine 17 is an ATP binding site. Zn(2+) is bound by residues cysteine 187, cysteine 195, cysteine 198, and cysteine 201.

This sequence belongs to the QueC family. Zn(2+) serves as cofactor.

The enzyme catalyses 7-carboxy-7-deazaguanine + NH4(+) + ATP = 7-cyano-7-deazaguanine + ADP + phosphate + H2O + H(+). It participates in purine metabolism; 7-cyano-7-deazaguanine biosynthesis. Its function is as follows. Catalyzes the ATP-dependent conversion of 7-carboxy-7-deazaguanine (CDG) to 7-cyano-7-deazaguanine (preQ(0)). In Chlorobium phaeobacteroides (strain BS1), this protein is 7-cyano-7-deazaguanine synthase.